We begin with the raw amino-acid sequence, 142 residues long: Acidic phospholipase A2 KBf-grIB (142 aa).

Intrachain disulfides connect Cys-28–Cys-94, Cys-44–Cys-141, Cys-46–Cys-62, Cys-61–Cys-122, Cys-68–Cys-115, Cys-78–Cys-108, and Cys-101–Cys-113. Positions 45, 47, and 49 each coordinate Ca(2+). Residue His-65 is part of the active site. Asp-66 is a Ca(2+) binding site. The active site involves Asp-116.

It belongs to the phospholipase A2 family. Group I subfamily. D49 sub-subfamily. Requires Ca(2+) as cofactor. As to expression, expressed by the venom gland.

Its subcellular location is the secreted. It carries out the reaction a 1,2-diacyl-sn-glycero-3-phosphocholine + H2O = a 1-acyl-sn-glycero-3-phosphocholine + a fatty acid + H(+). Functionally, PLA2 catalyzes the calcium-dependent hydrolysis of the 2-acyl groups in 3-sn-phosphoglycerides. The sequence is that of Acidic phospholipase A2 KBf-grIB from Bungarus fasciatus (Banded krait).